A 318-amino-acid polypeptide reads, in one-letter code: MKPNVVSADVLFEEFRNLLKWEWVAGLGASERRFAEVAVRAARSGADLVGYLNYIHPYRAQVLGEREIAYLTNATPEDCKRRIARIVTLEPPVLVLADGQAAPDEVVSMCERAQIPMFSTQESAAFVIDVLRAYLSKHFADRTTMHGVFMDILGLGVLITGESGLGKSELGLELITRGNGLVADDAVDLYRINQTTIEGKCPELLQNLLEVRGIGLLDIRAIFGETAVRRRMRLKLIVHLVRKETLERDYERLPYEPLTQDVLGVPVLKVVIQVVAGRNIAVLVEAAVRNTILQLRGIDTYQEFVERHRRAMERGGAS.

Active-site residues include histidine 146 and lysine 167. 161–168 is an ATP binding site; that stretch reads GESGLGKS. A Mg(2+)-binding site is contributed by serine 168. Aspartate 185 (proton acceptor; for phosphorylation activity. Proton donor; for dephosphorylation activity) is an active-site residue. The interval 209-218 is important for the catalytic mechanism of both phosphorylation and dephosphorylation; that stretch reads LEVRGIGLLD. Glutamate 210 contacts Mg(2+). Residue arginine 252 is part of the active site. Residues 273–278 form an important for the catalytic mechanism of dephosphorylation region; that stretch reads QVVAGR.

It belongs to the HPrK/P family. Homohexamer. Mg(2+) serves as cofactor.

The enzyme catalyses [HPr protein]-L-serine + ATP = [HPr protein]-O-phospho-L-serine + ADP + H(+). It catalyses the reaction [HPr protein]-O-phospho-L-serine + phosphate + H(+) = [HPr protein]-L-serine + diphosphate. Catalyzes the ATP- as well as the pyrophosphate-dependent phosphorylation of a specific serine residue in HPr, a phosphocarrier protein of the phosphoenolpyruvate-dependent sugar phosphotransferase system (PTS). HprK/P also catalyzes the pyrophosphate-producing, inorganic phosphate-dependent dephosphorylation (phosphorolysis) of seryl-phosphorylated HPr (P-Ser-HPr). The polypeptide is HPr kinase/phosphorylase (Acidovorax sp. (strain JS42)).